The sequence spans 545 residues: CTP synthase (545 aa).

Residues 1–266 are amidoligase domain; that stretch reads MTTNYIFVTG…DDYICKRFSL (266 aa). Residue S14 coordinates CTP. Residue S14 participates in UTP binding. ATP contacts are provided by residues 15–20 and D72; that span reads SLGKGI. Residues D72 and E140 each contribute to the Mg(2+) site. CTP contacts are provided by residues 147–149, 187–192, and K223; these read DIE and KTKPTQ. UTP is bound by residues 187 to 192 and K223; that span reads KTKPTQ. 239 to 241 is a binding site for ATP; the sequence is KDV. The region spanning 291–542 is the Glutamine amidotransferase type-1 domain; the sequence is TIGMVGKYIE…VKAASEFQKR (252 aa). G352 is an L-glutamine binding site. The Nucleophile; for glutamine hydrolysis role is filled by C379. Residues 380–383, E403, and R470 each bind L-glutamine; that span reads LGMQ. Residues H515 and E517 contribute to the active site.

Belongs to the CTP synthase family. In terms of assembly, homotetramer.

The enzyme catalyses UTP + L-glutamine + ATP + H2O = CTP + L-glutamate + ADP + phosphate + 2 H(+). The catalysed reaction is L-glutamine + H2O = L-glutamate + NH4(+). It catalyses the reaction UTP + NH4(+) + ATP = CTP + ADP + phosphate + 2 H(+). It functions in the pathway pyrimidine metabolism; CTP biosynthesis via de novo pathway; CTP from UDP: step 2/2. Allosterically activated by GTP, when glutamine is the substrate; GTP has no effect on the reaction when ammonia is the substrate. The allosteric effector GTP functions by stabilizing the protein conformation that binds the tetrahedral intermediate(s) formed during glutamine hydrolysis. Inhibited by the product CTP, via allosteric rather than competitive inhibition. Functionally, catalyzes the ATP-dependent amination of UTP to CTP with either L-glutamine or ammonia as the source of nitrogen. Regulates intracellular CTP levels through interactions with the four ribonucleotide triphosphates. This Shigella boydii serotype 18 (strain CDC 3083-94 / BS512) protein is CTP synthase.